The sequence spans 385 residues: Probable dual-specificity RNA methyltransferase RlmN (385 aa).

Residues 1-24 are disordered; the sequence is MTATTAESGNLLPLVSGRSRPPRH. The active-site Proton acceptor is Glu114. The region spanning 120 to 364 is the Radical SAM core domain; it reads YPQRATVCVS…AATVRDTRGR (245 aa). Cysteines 127 and 370 form a disulfide. 3 residues coordinate [4Fe-4S] cluster: Cys134, Cys138, and Cys141. Residues 194–195, Ser228, 251–253, and Asn327 contribute to the S-adenosyl-L-methionine site; these read GE and SLH. Cys370 serves as the catalytic S-methylcysteine intermediate.

It belongs to the radical SAM superfamily. RlmN family. It depends on [4Fe-4S] cluster as a cofactor.

It is found in the cytoplasm. It carries out the reaction adenosine(2503) in 23S rRNA + 2 reduced [2Fe-2S]-[ferredoxin] + 2 S-adenosyl-L-methionine = 2-methyladenosine(2503) in 23S rRNA + 5'-deoxyadenosine + L-methionine + 2 oxidized [2Fe-2S]-[ferredoxin] + S-adenosyl-L-homocysteine. The catalysed reaction is adenosine(37) in tRNA + 2 reduced [2Fe-2S]-[ferredoxin] + 2 S-adenosyl-L-methionine = 2-methyladenosine(37) in tRNA + 5'-deoxyadenosine + L-methionine + 2 oxidized [2Fe-2S]-[ferredoxin] + S-adenosyl-L-homocysteine. Functionally, specifically methylates position 2 of adenine 2503 in 23S rRNA and position 2 of adenine 37 in tRNAs. The chain is Probable dual-specificity RNA methyltransferase RlmN from Parafrankia sp. (strain EAN1pec).